Reading from the N-terminus, the 215-residue chain is 3-isopropylmalate dehydratase small subunit (215 aa).

The protein belongs to the LeuD family. LeuD type 1 subfamily. Heterodimer of LeuC and LeuD.

The enzyme catalyses (2R,3S)-3-isopropylmalate = (2S)-2-isopropylmalate. It participates in amino-acid biosynthesis; L-leucine biosynthesis; L-leucine from 3-methyl-2-oxobutanoate: step 2/4. Catalyzes the isomerization between 2-isopropylmalate and 3-isopropylmalate, via the formation of 2-isopropylmaleate. This is 3-isopropylmalate dehydratase small subunit from Hahella chejuensis (strain KCTC 2396).